We begin with the raw amino-acid sequence, 152 residues long: UPF0266 membrane protein YobD (152 aa).

The Periplasmic portion of the chain corresponds to 1-5; it reads MTITD. Residues 6–26 form a helical membrane-spanning segment; that stretch reads LVLILFIAALLAYALYDQFIM. Topologically, residues 27–44 are cytoplasmic; the sequence is PRRNGPTLLSIALLRRGR. Residues 45 to 65 form a helical membrane-spanning segment; it reads IDSVIFVGLVAILIYNNVTSH. A topological domain (periplasmic) is located at residue Gly66. A helical membrane pass occupies residues 67-87; it reads AQMTTWLLSALALMGFYIFWI. Topologically, residues 88-152 are cytoplasmic; it reads RTPRIIFKQR…KIYKLLIENQ (65 aa).

This sequence belongs to the UPF0266 family.

It is found in the cell inner membrane. The sequence is that of UPF0266 membrane protein YobD (yobD) from Salmonella typhi.